Reading from the N-terminus, the 748-residue chain is Photosystem I P700 chlorophyll a apoprotein A1 (748 aa).

8 helical membrane-spanning segments follow: residues 70 to 93, 156 to 179, 195 to 219, 291 to 309, 346 to 369, 385 to 411, 433 to 455, and 530 to 548; these read VFSAHFGQIAVILIWLSGMYFHGA, LYSTAIGGLVLATLTLIGGWYHYH, LNHHLAGLIGLGSLSWAGHQIHVSL, TAHHHLAIAVLFIIAGHQY, WHAQLALNLALFGSLTIIVAHHMY, LSLFTHHMWIGGFLVTGAAAHAAIFLV, AIISHLNWVCIFLGFHSFGLYIH, and FLVHHIHAFTIHVTVLILL. Positions 572 and 581 each coordinate [4Fe-4S] cluster. The next 2 membrane-spanning stretches (helical) occupy residues 588–609 and 662–684; these read HVFLGLFWMYNSISVVIFHFSW and LSAYGLIFLGAHFVWAFSLMFLF. H673 contacts chlorophyll a'. 2 residues coordinate chlorophyll a: M681 and Y689. W690 contributes to the phylloquinone binding site. Residues 722–742 traverse the membrane as a helical segment; the sequence is AVGVAHYLLGGIATTWAFFLA.

Belongs to the PsaA/PsaB family. In terms of assembly, the PsaA/B heterodimer binds the P700 chlorophyll special pair and subsequent electron acceptors. PSI consists of a core antenna complex that captures photons, and an electron transfer chain that converts photonic excitation into a charge separation. The eukaryotic PSI reaction center is composed of at least 11 subunits. P700 is a chlorophyll a/chlorophyll a' dimer, A0 is one or more chlorophyll a, A1 is one or both phylloquinones and FX is a shared 4Fe-4S iron-sulfur center. is required as a cofactor.

Its subcellular location is the plastid. The protein localises to the chloroplast thylakoid membrane. It carries out the reaction reduced [plastocyanin] + hnu + oxidized [2Fe-2S]-[ferredoxin] = oxidized [plastocyanin] + reduced [2Fe-2S]-[ferredoxin]. Functionally, psaA and PsaB bind P700, the primary electron donor of photosystem I (PSI), as well as the electron acceptors A0, A1 and FX. PSI is a plastocyanin-ferredoxin oxidoreductase, converting photonic excitation into a charge separation, which transfers an electron from the donor P700 chlorophyll pair to the spectroscopically characterized acceptors A0, A1, FX, FA and FB in turn. Oxidized P700 is reduced on the lumenal side of the thylakoid membrane by plastocyanin. The chain is Photosystem I P700 chlorophyll a apoprotein A1 from Chaetosphaeridium globosum (Charophycean green alga).